The primary structure comprises 217 residues: Phosphatidylserine decarboxylase proenzyme (217 aa).

Residue S183 is the Schiff-base intermediate with substrate; via pyruvic acid of the active site. S183 bears the Pyruvic acid (Ser); by autocatalysis mark.

It belongs to the phosphatidylserine decarboxylase family. PSD-A subfamily. Heterodimer of a large membrane-associated beta subunit and a small pyruvoyl-containing alpha subunit. The cofactor is pyruvate. Post-translationally, is synthesized initially as an inactive proenzyme. Formation of the active enzyme involves a self-maturation process in which the active site pyruvoyl group is generated from an internal serine residue via an autocatalytic post-translational modification. Two non-identical subunits are generated from the proenzyme in this reaction, and the pyruvate is formed at the N-terminus of the alpha chain, which is derived from the carboxyl end of the proenzyme. The post-translation cleavage follows an unusual pathway, termed non-hydrolytic serinolysis, in which the side chain hydroxyl group of the serine supplies its oxygen atom to form the C-terminus of the beta chain, while the remainder of the serine residue undergoes an oxidative deamination to produce ammonia and the pyruvoyl prosthetic group on the alpha chain.

The protein resides in the cell membrane. The catalysed reaction is a 1,2-diacyl-sn-glycero-3-phospho-L-serine + H(+) = a 1,2-diacyl-sn-glycero-3-phosphoethanolamine + CO2. It participates in phospholipid metabolism; phosphatidylethanolamine biosynthesis; phosphatidylethanolamine from CDP-diacylglycerol: step 2/2. Functionally, catalyzes the formation of phosphatidylethanolamine (PtdEtn) from phosphatidylserine (PtdSer). The sequence is that of Phosphatidylserine decarboxylase proenzyme from Cupriavidus pinatubonensis (strain JMP 134 / LMG 1197) (Cupriavidus necator (strain JMP 134)).